The chain runs to 195 residues: CD70 antigen (195 aa).

The Cytoplasmic portion of the chain corresponds to 1-23 (MPEEGRPCPWVRWSGTAFQRQWP). The chain crosses the membrane as a helical; Signal-anchor for type II membrane protein span at residues 24–44 (WLLLVVFITVFCCWFHCSGLL). At 45–195 (SKQQQRLLEH…TFFGVQWICP (151 aa)) the chain is on the extracellular side. One can recognise a THD domain in the interval 58–193 (HTAELQLNLT…DETFFGVQWI (136 aa)). N-linked (GlcNAc...) asparagine glycans are attached at residues Asn65 and Asn116. Intrachain disulfides connect Cys117/Cys153 and Cys135/Cys170. N-linked (GlcNAc...) asparagine glycosylation occurs at Asn172.

The protein belongs to the tumor necrosis factor family. As to quaternary structure, homotrimer. N-glycosylated. In terms of tissue distribution, very low level of expression. Detected in splenocytes and thymocytes.

It is found in the cell membrane. Its function is as follows. Expressed at the plasma membrane of B cells, it is the ligand of the CD27 receptor which is specifically expressed at the surface of T cells. The CD70-CD27 signaling pathway mediates antigen-specific T cell activation and expansion which in turn provides immune surveillance of B cells. The chain is CD70 antigen from Mus musculus (Mouse).